The following is a 353-amino-acid chain: UPF0283 membrane protein YcjF (353 aa).

A compositionally biased stretch (basic and acidic residues) spans Met-1–Pro-19. A disordered region spans residues Met-1–Arg-35. Helical transmembrane passes span Met-70–Thr-90, Val-100–Val-120, and Glu-213–Trp-233.

This sequence belongs to the UPF0283 family.

Its subcellular location is the cell inner membrane. This chain is UPF0283 membrane protein YcjF, found in Salmonella choleraesuis (strain SC-B67).